A 238-amino-acid chain; its full sequence is Putative pectate lyase X (238 aa).

The first 22 residues, 1-22 (MKYLLPTAAAGLLLLAAQPAMA), serve as a signal peptide directing secretion. Residues D153, E188, and D192 each coordinate Ca(2+).

The protein belongs to the polysaccharide lyase 1 family. Requires Ca(2+) as cofactor.

It carries out the reaction Eliminative cleavage of (1-&gt;4)-alpha-D-galacturonan to give oligosaccharides with 4-deoxy-alpha-D-galact-4-enuronosyl groups at their non-reducing ends.. Its pathway is glycan metabolism; pectin degradation; 2-dehydro-3-deoxy-D-gluconate from pectin: step 2/5. Its function is as follows. Involved in maceration and soft-rotting of plant tissue. This chain is Putative pectate lyase X (PEL X), found in Pectobacterium carotovorum (Erwinia carotovora).